Here is a 472-residue protein sequence, read N- to C-terminus: MSSSNNSLNNKAQAWSARFAEPVDELVQRYTASIGFDQRFAMVDIAGSLAHAEMLATQKIISAQDLADIQKGMAQIQSEIEAGQFEWQLALEDVHLNIEARLTQLVGDAGKRLHTGRSRNDQVATDLRLWLRGSVDEIALTLKSLRVALLDLAEKHASTIMPGHTHLQVAQPITFGHHLMAYFEMFSRDASRLADLRARFNRLPLGAAALAGTTYPINREQVAKALGFDGTCNNSLDAVSDRDFAIEFCAFASILMMHVSRLSEELILWLSPRFGFIDLPDRFCTGSSIMPQKKNPDVPELARGKTGRVYGDLISLLTLMKGQPLAYNKDDQEDKEPLFDAVDTVQDTLRIFADMVPHIEVKSEAMKKAAEEGFATATDLADYLVKKGLAFRDAHEAVAHAVKACVGRNCMLTDLSLSELRFACGLDNRPELIGDDVFVLLTVDGSVQSRQHAGGTAPAQVLAAIKRGRADL.

The protein belongs to the lyase 1 family. Argininosuccinate lyase subfamily.

It is found in the cytoplasm. The catalysed reaction is 2-(N(omega)-L-arginino)succinate = fumarate + L-arginine. Its pathway is amino-acid biosynthesis; L-arginine biosynthesis; L-arginine from L-ornithine and carbamoyl phosphate: step 3/3. In Polynucleobacter necessarius subsp. necessarius (strain STIR1), this protein is Argininosuccinate lyase.